The sequence spans 85 residues: Large ribosomal subunit protein bL27 (85 aa).

Residues 1-21 (MAHKKGQGSTQNNRDSAGRRL) are disordered.

It belongs to the bacterial ribosomal protein bL27 family.

This Nitratiruptor sp. (strain SB155-2) protein is Large ribosomal subunit protein bL27.